Consider the following 584-residue polypeptide: Proline--tRNA ligase (584 aa).

The protein belongs to the class-II aminoacyl-tRNA synthetase family. ProS type 1 subfamily. As to quaternary structure, homodimer.

The protein localises to the cytoplasm. It catalyses the reaction tRNA(Pro) + L-proline + ATP = L-prolyl-tRNA(Pro) + AMP + diphosphate. Catalyzes the attachment of proline to tRNA(Pro) in a two-step reaction: proline is first activated by ATP to form Pro-AMP and then transferred to the acceptor end of tRNA(Pro). As ProRS can inadvertently accommodate and process non-cognate amino acids such as alanine and cysteine, to avoid such errors it has two additional distinct editing activities against alanine. One activity is designated as 'pretransfer' editing and involves the tRNA(Pro)-independent hydrolysis of activated Ala-AMP. The other activity is designated 'posttransfer' editing and involves deacylation of mischarged Ala-tRNA(Pro). The misacylated Cys-tRNA(Pro) is not edited by ProRS. The polypeptide is Proline--tRNA ligase (Mycobacterium sp. (strain KMS)).